Here is a 165-residue protein sequence, read N- to C-terminus: Transcription elongation factor GreA (165 aa).

Residues 55-78 (AAKEEQGKQELRVRQLTQLLESAK) are a coiled coil.

The protein belongs to the GreA/GreB family.

In terms of biological role, necessary for efficient RNA polymerase transcription elongation past template-encoded arresting sites. The arresting sites in DNA have the property of trapping a certain fraction of elongating RNA polymerases that pass through, resulting in locked ternary complexes. Cleavage of the nascent transcript by cleavage factors such as GreA or GreB allows the resumption of elongation from the new 3'terminus. GreA releases sequences of 2 to 3 nucleotides. The protein is Transcription elongation factor GreA of Streptomyces coelicolor (strain ATCC BAA-471 / A3(2) / M145).